The sequence spans 777 residues: Glucocorticoid receptor (777 aa).

Residues 1-14 (MDSKESLTPGKEEN) show a composition bias toward basic and acidic residues. Positions 1–21 (MDSKESLTPGKEENPSSVLTQ) are disordered. The modulating stretch occupies residues 1 to 420 (MDSKESLTPG…TATTGPPPKL (420 aa)). T8 carries the post-translational modification Phosphothreonine. R23 carries the omega-N-methylarginine modification. 4 positions are modified to phosphoserine: S45, S113, S134, and S141. The interval 130-182 (NRSTSVPENPKSSASSSVSAAPKEKEFPKTHSDVSSEQQNLKGQTGTNGGNVK) is disordered. The span at 134-150 (SVPENPKSSASSSVSAA) shows a compositional bias: low complexity. The segment covering 151-163 (PKEKEFPKTHSDV) has biased composition (basic and acidic residues). Polar residues predominate over residues 164–174 (SSEQQNLKGQT). Residues S203, S211, and S226 each carry the phosphoserine modification. A Glycyl lysine isopeptide (Lys-Gly) (interchain with G-Cter in SUMO2) cross-link involves residue K258. The residue at position 267 (S267) is a Phosphoserine. Glycyl lysine isopeptide (Lys-Gly) (interchain with G-Cter in SUMO); alternate cross-links involve residues K277 and K293. Residues K277 and K293 each participate in a glycyl lysine isopeptide (Lys-Gly) (interchain with G-Cter in SUMO2); alternate cross-link. Over residues 394–414 (SSPSMRPDVSSPPSSSSTATT) the composition is skewed to low complexity. The disordered stretch occupies residues 394 to 415 (SSPSMRPDVSSPPSSSSTATTG). Phosphoserine is present on S404. Residue K419 forms a Glycyl lysine isopeptide (Lys-Gly) (interchain with G-Cter in ubiquitin) linkage. 2 NR C4-type zinc fingers span residues 421 to 441 (CLVC…CGSC) and 457 to 481 (CAGR…YRKC). Residues 421 to 486 (CLVCSDEASG…RYRKCLQAGM (66 aa)) constitute a DNA-binding region (nuclear receptor). N6-acetyllysine is present on residues K480, K492, K494, and K495. The interval 485–777 (GMNLEARKTK…NIKKLLFHQK (293 aa)) is interaction with CLOCK. A hinge region spans residues 487-523 (NLEARKTKKKIKGIQQATTGVSQETSENPANKTIVPA). Residues 524–758 (TLPQLTPTLV…FPEMLAEIIT (235 aa)) form the NR LBD domain. Residues 532–697 (LVSLLEVIEP…EIRMTYIKEL (166 aa)) form an interaction with CRY1 region. K703 is covalently cross-linked (Glycyl lysine isopeptide (Lys-Gly) (interchain with G-Cter in SUMO)).

This sequence belongs to the nuclear hormone receptor family. NR3 subfamily. In terms of assembly, heteromultimeric cytoplasmic complex with HSP90AA1, HSPA1A/HSPA1B, and FKBP5 or another immunophilin such as PPID, STIP1, or the immunophilin homolog PPP5C. Upon ligand binding FKBP5 dissociates from the complex and FKBP4 takes its place, thereby linking the complex to dynein and mediating transport to the nucleus, where the complex dissociates. Probably forms a complex composed of chaperones HSP90 and HSP70, co-chaperones CDC37, PPP5C, TSC1 and client protein TSC2, CDK4, AKT, RAF1 and NR3C1; this complex does not contain co-chaperones STIP1/HOP and PTGES3/p23. Directly interacts with UNC45A. Binds to DNA as a homodimer, and as heterodimer with NR3C2 or the retinoid X receptor. Binds STAT5A and STAT5B homodimers and heterodimers. Interacts with NRIP1, POU2F1, POU2F2 and TRIM28. Interacts with several coactivator complexes, including the SMARCA4 complex, CREBBP/EP300, TADA2L (Ada complex) and p160 coactivators such as NCOA2 and NCOA6. Interaction with BAG1 inhibits transactivation. Interacts with HEXIM1 and TGFB1I1. Interacts with NCOA1. Interacts with NCOA3, SMARCA4, SMARCC1, SMARCD1, and SMARCE1. Interacts with CLOCK, CRY1 and CRY2 in a ligand-dependent fashion. Interacts with CIART. Interacts with RWDD3. Interacts with UBE2I/UBC9 and this interaction is enhanced in the presence of RWDD3. Interacts with GRIP1. Interacts with NR4A3 (via nuclear receptor DNA-binding domain), represses transcription activity of NR4A3 on the POMC promoter Nur response element (NurRE). Directly interacts with PNRC2 to attract and form a complex with UPF1 and DCP1A; the interaction leads to rapid mRNA degradation. Interacts with GSK3B. Interacts with FNIP1 and FNIP2. Interacts (via C-terminus) with HNRNPU (via C-terminus). Interacts with MCM3AP. Interacts (via domain NR LBD) with HSP90AA1 and HSP90AB1. In the absence of hormonal ligand, interacts with TACC1. Interacts (via NR LBD domain) with ZNF764 (via KRAB domain); the interaction regulates transcription factor activity of NR3C1 by directing its actions toward certain biologic pathways. In terms of processing, acetylation by CLOCK reduces its binding to glucocorticoid response elements and its transcriptional activity. Post-translationally, increased proteasome-mediated degradation in response to glucocorticoids. Phosphorylated in the absence of hormone; becomes hyperphosphorylated in the presence of glucocorticoid. The Ser-203, Ser-226 and Ser-404-phosphorylated forms are mainly cytoplasmic, and the Ser-211-phosphorylated form is nuclear. Phosphorylation at Ser-211 increases transcriptional activity. Phosphorylation at Ser-203, Ser-226 and Ser-404 decreases signaling capacity. Phosphorylation at Ser-404 may protect from glucocorticoid-induced apoptosis. Phosphorylation at Ser-203 and Ser-211 is not required in regulation of chromosome segregation. May be dephosphorylated by PPP5C, attenuates NR3C1 action. In terms of processing, ubiquitinated by UBR5, leading to its degradation: UBR5 specifically recognizes and binds ligand-bound NR3C1 when it is not associated with coactivators (NCOAs). In presence of NCOAs, the UBR5-degron is not accessible, preventing its ubiquitination and degradation. Post-translationally, sumoylation at Lys-277 and Lys-293 negatively regulates its transcriptional activity. Sumoylation at Lys-703 positively regulates its transcriptional activity in the presence of RWDD3. Sumoylation at Lys-277 and Lys-293 is dispensable whereas sumoylation at Lys-703 is critical for the stimulatory effect of RWDD3 on its transcriptional activity. Heat shock increases sumoylation in a RWDD3-dependent manner. Within the infant and adult hippocampal formation, highest expression observed in the DG granule cell layer with moderate levels in the DG hilus, the CA2-CA4 pyramidal cell layer and the proximal part of the CA1 pyramidal cell layer. Moderate to high expression levels found in the presubiculum and in its' superficial layers. Weak but specific expression detected throughout the entire corticle mantle. In the amygdala, moderate levels were detected in the lateral, central and medial nuclei. Moderate expression levels were present in the PVNh alongside the third ventricle.

It is found in the cytoplasm. It localises to the nucleus. The protein resides in the mitochondrion. Its subcellular location is the cytoskeleton. The protein localises to the spindle. It is found in the microtubule organizing center. It localises to the centrosome. The protein resides in the chromosome. Its subcellular location is the nucleoplasm. In terms of biological role, receptor for glucocorticoids (GC). Has a dual mode of action: as a transcription factor that binds to glucocorticoid response elements (GRE), both for nuclear and mitochondrial DNA, and as a modulator of other transcription factors. Affects inflammatory responses, cellular proliferation and differentiation in target tissues. Involved in chromatin remodeling. Plays a role in rapid mRNA degradation by binding to the 5' UTR of target mRNAs and interacting with PNRC2 in a ligand-dependent manner which recruits the RNA helicase UPF1 and the mRNA-decapping enzyme DCP1A, leading to RNA decay. Could act as a coactivator for STAT5-dependent transcription upon growth hormone (GH) stimulation and could reveal an essential role of hepatic GR in the control of body growth. Mediates glucocorticoid-induced apoptosis. Promotes accurate chromosome segregation during mitosis. May act as a tumor suppressor. May play a negative role in adipogenesis through the regulation of lipolytic and antilipogenic gene expression. This Callithrix jacchus (White-tufted-ear marmoset) protein is Glucocorticoid receptor (NR3C1).